We begin with the raw amino-acid sequence, 248 residues long: Ribonuclease PH (248 aa).

Phosphate contacts are provided by residues Arg-86 and 124–126 (GTR).

It belongs to the RNase PH family. Homohexameric ring arranged as a trimer of dimers.

The catalysed reaction is tRNA(n+1) + phosphate = tRNA(n) + a ribonucleoside 5'-diphosphate. Phosphorolytic 3'-5' exoribonuclease that plays an important role in tRNA 3'-end maturation. Removes nucleotide residues following the 3'-CCA terminus of tRNAs; can also add nucleotides to the ends of RNA molecules by using nucleoside diphosphates as substrates, but this may not be physiologically important. Probably plays a role in initiation of 16S rRNA degradation (leading to ribosome degradation) during starvation. The polypeptide is Ribonuclease PH (Clostridium perfringens (strain 13 / Type A)).